Consider the following 94-residue polypeptide: Small ribosomal subunit protein uS19c (94 aa).

The protein belongs to the universal ribosomal protein uS19 family.

Its subcellular location is the plastid. Functionally, protein S19 forms a complex with S13 that binds strongly to the 16S ribosomal RNA. The sequence is that of Small ribosomal subunit protein uS19c (rps19) from Epifagus virginiana (Beechdrops).